A 953-amino-acid chain; its full sequence is Lysosomal alpha-glucosidase (953 aa).

Residues 1–27 (MNIRKPLCSNSVVGACTLISLTTAVIL) form the signal peptide. A propeptide spanning residues 28–69 (GHLMLRELMLLPQDLHESSSGLWKTYRPHHQEGYKPGPLHIQ) is cleaved from the precursor. One can recognise a P-type domain in the interval 80–131 (TQCDVPPSSRFDCAPDKGISQEQCEARGCCYVPAGQVLKEPQIGQPWCFFPP). Cystine bridges form between Cys-82–Cys-109, Cys-92–Cys-108, and Cys-103–Cys-127. N-linked (GlcNAc...) asparagine glycans are attached at residues Asn-140, Asn-233, and Asn-390. Asp-404 lines the substrate pocket. Asn-470 carries N-linked (GlcNAc...) asparagine glycosylation. Asp-518 (nucleophile) is an active-site residue. Glu-521 is an active-site residue. Cys-533 and Cys-558 are disulfide-bonded. Residues Arg-600 and Asp-616 each coordinate substrate. Cys-647 and Cys-658 are joined by a disulfide. Residue His-674 coordinates substrate. Asn-883, Asn-926, and Asn-933 each carry an N-linked (GlcNAc...) asparagine glycan.

Belongs to the glycosyl hydrolase 31 family.

It localises to the lysosome. The protein resides in the lysosome membrane. It catalyses the reaction Hydrolysis of terminal, non-reducing (1-&gt;4)-linked alpha-D-glucose residues with release of alpha-D-glucose.. Essential for the degradation of glycogen in lysosomes. Has highest activity on alpha-1,4-linked glycosidic linkages, but can also hydrolyze alpha-1,6-linked glucans. In Mus musculus (Mouse), this protein is Lysosomal alpha-glucosidase (Gaa).